The chain runs to 126 residues: Fluoride-specific ion channel FluC (126 aa).

4 helical membrane-spanning segments follow: residues 4–24 (YLYIAAGGAAGSLCRYLVSGV), 35–55 (IGTFSVNMIGCLFFGLVTGLF), 67–87 (LLILTGFMGAFTTFSTYMFES), and 100–120 (ALNIGGQSILGFACIVGGLAL). Na(+) is bound by residues glycine 75 and threonine 78.

Belongs to the fluoride channel Fluc/FEX (TC 1.A.43) family.

The protein resides in the cell inner membrane. It catalyses the reaction fluoride(in) = fluoride(out). With respect to regulation, na(+) is not transported, but it plays an essential structural role and its presence is essential for fluoride channel function. Fluoride-specific ion channel. Important for reducing fluoride concentration in the cell, thus reducing its toxicity. This chain is Fluoride-specific ion channel FluC, found in Maridesulfovibrio salexigens (strain ATCC 14822 / DSM 2638 / NCIMB 8403 / VKM B-1763) (Desulfovibrio salexigens).